Reading from the N-terminus, the 47-residue chain is MKKITWIILLLLAAIILAACQANYIHDVQGGTVSPSSSAELTGLATQ.

The N-terminal stretch at 1–19 (MKKITWIILLLLAAIILAA) is a signal peptide. The N-palmitoyl cysteine moiety is linked to residue C20. C20 carries S-diacylglycerol cysteine lipidation.

It is found in the cell outer membrane. Functionally, lysis proteins are required for both colicin release and partial cell lysis. This Escherichia coli protein is Lysis protein for colicin E5 (lys).